The sequence spans 823 residues: Sphingomyelin phosphodiesterase 4 (823 aa).

Phosphoserine occurs at positions 130 and 245. A Phosphothreonine modification is found at Thr665. The residue at position 749 (Ser749) is a Phosphoserine. Residues 776–796 (LLLLLMAFFVASLFCIGPLSC) form a helical membrane-spanning segment.

The cofactor is Mg(2+). In terms of tissue distribution, expressed in skeletal muscle (at protein level). As to expression, expressed in skeletal muscle but a lower levels than isoform 1 (at protein level).

It is found in the endoplasmic reticulum membrane. The protein resides in the golgi apparatus membrane. It localises to the nucleus envelope. The protein localises to the cell membrane. Its subcellular location is the sarcolemma. It catalyses the reaction a sphingomyelin + H2O = phosphocholine + an N-acylsphing-4-enine + H(+). Activated by phosphatidylserine and tumor necrosis factor (TNF). Inhibited by scyphostatin. Catalyzes the hydrolysis of membrane sphingomyelin to form phosphorylcholine and ceramide. It has a relevant role in the homeostasis of membrane sphingolipids, thereby influencing membrane integrity, and endoplasmic reticulum organization and function. May sensitize cells to DNA damage-induced apoptosis. In skeletal muscle, mediates TNF-stimulated oxidant production. The chain is Sphingomyelin phosphodiesterase 4 (Smpd4) from Mus musculus (Mouse).